The primary structure comprises 1218 residues: Coatomer subunit alpha-2 (1218 aa).

8 WD repeats span residues 7–48, 49–88, 91–132, 133–172, 202–241, 246–285, 288–326, and 363–404; these read TKSN…DRFD, EHDG…CLFT, GHLD…AVLT, GHNH…KKSV, GHDR…AWEV, GHMN…GIQT, REHD…PAFS, and SLNQ…AGRA. The interval 855–876 is disordered; the sequence is MANGGDGFDAEEGEANEEDGEE. Over residues 862–876 the composition is skewed to acidic residues; it reads FDAEEGEANEEDGEE.

In terms of assembly, oligomeric complex that consists of at least the alpha, beta, beta', gamma, delta, epsilon and zeta subunits.

The protein resides in the cytoplasm. Its subcellular location is the golgi apparatus membrane. It localises to the cytoplasmic vesicle. The protein localises to the COPI-coated vesicle membrane. Functionally, the coatomer is a cytosolic protein complex that binds to dilysine motifs and reversibly associates with Golgi non-clathrin-coated vesicles, which further mediate biosynthetic protein transport from the ER, via the Golgi up to the trans Golgi network. Coatomer complex is required for budding from Golgi membranes, and is essential for the retrograde Golgi-to-ER transport of dilysine-tagged proteins. This is Coatomer subunit alpha-2 from Oryza sativa subsp. japonica (Rice).